We begin with the raw amino-acid sequence, 184 residues long: Ribosome-recycling factor (184 aa).

This sequence belongs to the RRF family.

The protein localises to the cytoplasm. Functionally, responsible for the release of ribosomes from messenger RNA at the termination of protein biosynthesis. May increase the efficiency of translation by recycling ribosomes from one round of translation to another. The protein is Ribosome-recycling factor of Clostridium botulinum (strain Loch Maree / Type A3).